An 852-amino-acid polypeptide reads, in one-letter code: Bifunctional uridylyltransferase/uridylyl-removing enzyme (852 aa).

The uridylyltransferase stretch occupies residues 1–318; it reads MPANLSSALE…SAPMRVTLRI (318 aa). The segment at 319–672 is uridylyl-removing; that stretch reads DDDYIQVNNQ…SRILFKSDSF (354 aa). The 123-residue stretch at 436 to 558 folds into the HD domain; that stretch reads VDDHILTVVR…VQTHERLSAL (123 aa). 2 consecutive ACT domains span residues 673–757 and 785–852; these read QVMV…SHSR and SVEI…EQLS.

This sequence belongs to the GlnD family. Requires Mg(2+) as cofactor.

It catalyses the reaction [protein-PII]-L-tyrosine + UTP = [protein-PII]-uridylyl-L-tyrosine + diphosphate. The enzyme catalyses [protein-PII]-uridylyl-L-tyrosine + H2O = [protein-PII]-L-tyrosine + UMP + H(+). With respect to regulation, uridylyltransferase (UTase) activity is inhibited by glutamine, while glutamine activates uridylyl-removing (UR) activity. In terms of biological role, modifies, by uridylylation and deuridylylation, the PII regulatory proteins (GlnB and homologs), in response to the nitrogen status of the cell that GlnD senses through the glutamine level. Under low glutamine levels, catalyzes the conversion of the PII proteins and UTP to PII-UMP and PPi, while under higher glutamine levels, GlnD hydrolyzes PII-UMP to PII and UMP (deuridylylation). Thus, controls uridylylation state and activity of the PII proteins, and plays an important role in the regulation of nitrogen assimilation and metabolism. The chain is Bifunctional uridylyltransferase/uridylyl-removing enzyme from Neisseria meningitidis serogroup A / serotype 4A (strain DSM 15465 / Z2491).